Consider the following 315-residue polypeptide: Porphobilinogen deaminase (315 aa).

The residue at position 234 (cysteine 234) is an S-(dipyrrolylmethanemethyl)cysteine.

It belongs to the HMBS family. As to quaternary structure, monomer. Dipyrromethane is required as a cofactor.

It carries out the reaction 4 porphobilinogen + H2O = hydroxymethylbilane + 4 NH4(+). The protein operates within porphyrin-containing compound metabolism; protoporphyrin-IX biosynthesis; coproporphyrinogen-III from 5-aminolevulinate: step 2/4. Tetrapolymerization of the monopyrrole PBG into the hydroxymethylbilane pre-uroporphyrinogen in several discrete steps. The protein is Porphobilinogen deaminase of Mycobacterium avium (strain 104).